Reading from the N-terminus, the 257-residue chain is Pyridoxine 5'-phosphate synthase (257 aa).

Asn-6 is a binding site for 3-amino-2-oxopropyl phosphate. Position 8–9 (8–9 (DH)) interacts with 1-deoxy-D-xylulose 5-phosphate. Arg-17 provides a ligand contact to 3-amino-2-oxopropyl phosphate. Catalysis depends on His-42, which acts as the Proton acceptor. Positions 44 and 49 each coordinate 1-deoxy-D-xylulose 5-phosphate. Catalysis depends on Glu-69, which acts as the Proton acceptor. Position 99 (Thr-99) interacts with 1-deoxy-D-xylulose 5-phosphate. Catalysis depends on His-211, which acts as the Proton donor. Residues Gly-212 and 233–234 (GQ) each bind 3-amino-2-oxopropyl phosphate.

Belongs to the PNP synthase family. Homooctamer; tetramer of dimers.

It localises to the cytoplasm. It catalyses the reaction 3-amino-2-oxopropyl phosphate + 1-deoxy-D-xylulose 5-phosphate = pyridoxine 5'-phosphate + phosphate + 2 H2O + H(+). The protein operates within cofactor biosynthesis; pyridoxine 5'-phosphate biosynthesis; pyridoxine 5'-phosphate from D-erythrose 4-phosphate: step 5/5. In terms of biological role, catalyzes the complicated ring closure reaction between the two acyclic compounds 1-deoxy-D-xylulose-5-phosphate (DXP) and 3-amino-2-oxopropyl phosphate (1-amino-acetone-3-phosphate or AAP) to form pyridoxine 5'-phosphate (PNP) and inorganic phosphate. This is Pyridoxine 5'-phosphate synthase from Campylobacter hominis (strain ATCC BAA-381 / DSM 21671 / CCUG 45161 / LMG 19568 / NCTC 13146 / CH001A).